Here is a 138-residue protein sequence, read N- to C-terminus: DNA-directed RNA polymerase subunit omega (138 aa).

This sequence belongs to the RNA polymerase subunit omega family. In terms of assembly, the RNAP catalytic core consists of 2 alpha, 1 beta, 1 beta' and 1 omega subunit. When a sigma factor is associated with the core the holoenzyme is formed, which can initiate transcription.

The enzyme catalyses RNA(n) + a ribonucleoside 5'-triphosphate = RNA(n+1) + diphosphate. In terms of biological role, promotes RNA polymerase assembly. Latches the N- and C-terminal regions of the beta' subunit thereby facilitating its interaction with the beta and alpha subunits. In Thermodesulfovibrio yellowstonii (strain ATCC 51303 / DSM 11347 / YP87), this protein is DNA-directed RNA polymerase subunit omega.